The sequence spans 1109 residues: Coiled-coil domain-containing protein 158 (1109 aa).

Residues 1–12 are compositionally biased toward basic and acidic residues; sequence MESKACESKNED. The tract at residues 1–31 is disordered; sequence MESKACESKNEDLLPSGITSKGGSSSPFFVT. Residues 17–31 are compositionally biased toward polar residues; the sequence is GITSKGGSSSPFFVT. Coiled coils occupy residues 71-166 and 242-828; these read GKEH…MLKD and VEDQ…QEQE. 2 disordered regions span residues 843 to 897 and 952 to 1061; these read LQGP…DPTR and HRSN…TGKT. 3 stretches are compositionally biased toward polar residues: residues 862–882, 953–970, and 988–998; these read ASVTRSHSNIPSSQSTTSFLS, RSNNSLRESTEGSKSSET, and SCFTFTSTASP. The segment covering 999–1019 has biased composition (low complexity); the sequence is SGKMSASRSFSSSPKKSPVHS. Composition is skewed to polar residues over residues 1020 to 1037 and 1043 to 1061; these read LLTSSAEESVNSTPQYRS and SPTSAKDSQSPSLETTGKT. A coiled-coil region spans residues 1053–1109; sequence PSLETTGKTCQKLQNRLESLQTLVEDLQLKNQAMSSMIRNQEKRIQKVKDQEKMLLK.

In Mus musculus (Mouse), this protein is Coiled-coil domain-containing protein 158 (Ccdc158).